The following is a 76-amino-acid chain: Defensin-like protein 71 (76 aa).

Residues 1–22 (MAMTQVFVIFILLATSLCNSNA) form the signal peptide. 4 disulfide bridges follow: Cys-36-Cys-74, Cys-40-Cys-63, Cys-49-Cys-72, and Cys-53-Cys-73.

The protein belongs to the DEFL family.

The protein resides in the secreted. In Arabidopsis thaliana (Mouse-ear cress), this protein is Defensin-like protein 71 (LCR84).